The chain runs to 382 residues: Acetylserotonin O-methyltransferase (382 aa).

S-adenosyl-L-homocysteine is bound by residues Gly218, Asp241, Asp261, Met262, and Lys275. His279 acts as the Proton acceptor in catalysis. Active-site residues include Glu308 and Glu347.

Belongs to the class I-like SAM-binding methyltransferase superfamily. Cation-independent O-methyltransferase family.

Its subcellular location is the cytoplasm. It carries out the reaction N-acetylserotonin + S-adenosyl-L-methionine = melatonin + S-adenosyl-L-homocysteine + H(+). It functions in the pathway aromatic compound metabolism; melatonin biosynthesis; melatonin from serotonin: step 1/2. Methyltransferase which catalyzes the transfer of a methyl group onto N-acetylserotonin, producing melatonin (N-acetyl-5-methoxytryptamine). Does not seem to possess caffeate O-methyltransferase activity. Implicated in melatonin-dependent circadian dynamics of stomatal aperture to minimize night water loss and promote drought tolerance. Prevents seed germination by promoting melatonin biosynthesis. Promotes melatonin-triggered defense responses to the necrotrophic fungus Botrytis cinerea. Functionally, (Microbial infection) Promotes melatonin-triggered defense responses to the necrotrophic fungus Botrytis cinerea. The sequence is that of Acetylserotonin O-methyltransferase from Arabidopsis thaliana (Mouse-ear cress).